Here is a 119-residue protein sequence, read N- to C-terminus: Promotilin (119 aa).

Residues 1–25 (MVSRKAVVVLLVVHAAAMLASHTEA) form the signal peptide. Residues 40 to 72 (EKERNKGQKKSLSVQQASEELGPLDPSEPTKEE) form a disordered region.

This sequence belongs to the motilin family.

The protein localises to the secreted. In terms of biological role, plays an important role in the regulation of interdigestive gastrointestinal motility and indirectly causes rhythmic contraction of duodenal and colonic smooth muscle. The polypeptide is Promotilin (MLN) (Sus scrofa (Pig)).